A 322-amino-acid polypeptide reads, in one-letter code: NADH-cytochrome b5 reductase 2 (322 aa).

The helical transmembrane segment at 32 to 48 (LAPIYISVGLAGLGVGL) threads the bilayer. Residues 72–176 (QGWVDLKLSE…KGPIPKYPWE (105 aa)) enclose the FAD-binding FR-type domain. 179–214 (KHKHICLIAGGTGITPMYQLARQIFKNPEDQTKVTL) provides a ligand contact to FAD.

It belongs to the flavoprotein pyridine nucleotide cytochrome reductase family. The cofactor is FAD.

Its subcellular location is the mitochondrion outer membrane. The catalysed reaction is 2 Fe(III)-[cytochrome b5] + NADH = 2 Fe(II)-[cytochrome b5] + NAD(+) + H(+). May mediate the reduction of outer membrane cytochrome b5. This chain is NADH-cytochrome b5 reductase 2 (mcr1), found in Aspergillus clavatus (strain ATCC 1007 / CBS 513.65 / DSM 816 / NCTC 3887 / NRRL 1 / QM 1276 / 107).